A 666-amino-acid polypeptide reads, in one-letter code: Sodium/potassium/calcium exchanger 2 (666 aa).

Residues 1-38 (MDLHQSPTARLLQKWCSHESPFGCRRHYNSRKKLKLIR) lie on the Cytoplasmic side of the membrane. Residues 39 to 59 (VIGLVMGLVAVSTVPFSISAF) traverse the membrane as a helical segment. Residues 60 to 133 (TETDSQSNRG…DIFSLEERRK (74 aa)) are Extracellular-facing. A disordered region spans residues 63–122 (DSQSNRGEASDMSGPRVAQGHRQRTLLDLNDKIRDYTPQPPASQEDQAENSTEHTQGDYP). N-linked (GlcNAc...) asparagine glycosylation is present at asparagine 112. Residues 113–122 (STEHTQGDYP) are compositionally biased toward basic and acidic residues. Residues 134-154 (GAIILHVIGMIYMFIALAIVC) traverse the membrane as a helical segment. The Cytoplasmic segment spans residues 155–179 (DEFFVPSLTVITEKLGISDDVAGAT). The Alpha-1 repeat unit spans residues 175-215 (VAGATFMAAGGSAPELFTSLIGVFIAHSNVGIGTIVGSAVF). A helical transmembrane segment spans residues 180-200 (FMAAGGSAPELFTSLIGVFIA). Over 201–205 (HSNVG) the chain is Extracellular. The helical transmembrane segment at 206 to 226 (IGTIVGSAVFNILFVIGMCAL) threads the bilayer. Over 227 to 237 (FSREILNLTWW) the chain is Cytoplasmic. Residues 238–258 (PLFRDVSFYIVDLLMLITFFL) traverse the membrane as a helical segment. Topologically, residues 259 to 260 (DN) are extracellular. A helical membrane pass occupies residues 261 to 281 (VIMWWESLLLLTAYFAYVVFM). The Cytoplasmic segment spans residues 282–502 (KFNVQVERWV…PDVRKPASRK (221 aa)). A disordered region spans residues 311–336 (KSPTAGDKDGPTLPSKPRLQRGGSSA). A phosphoserine mark is found at serine 337 and serine 341. Positions 397 to 467 (VDENERQNGA…EEDDQPLSLS (71 aa)) are disordered. Over residues 416–442 (PNSTSTEVEMTPSSEASEPVQNGNLSH) the composition is skewed to polar residues. Residues 503–523 (FFPITFFGSITWIAVFSYLMV) form a helical membrane-spanning segment. Residues 524–538 (WWAHQVGETIGISEE) are Extracellular-facing. Residues 539–559 (IMGLTILAAGTSIPDLITSVI) form a helical membrane-spanning segment. An Alpha-2 repeat occupies 546–577 (AAGTSIPDLITSVIVARKGLGDMAVSSSVGSN). At 560–574 (VARKGLGDMAVSSSV) the chain is on the cytoplasmic side. The chain crosses the membrane as a helical span at residues 575–595 (GSNIFDITVGLPLPWLLYTII). Topologically, residues 596-607 (HRFSPVTVSSNG) are extracellular. Residues 608–628 (LFCAIVLLFIMLLFVILSIAL) form a helical membrane-spanning segment. Over 629–635 (CKWRMNK) the chain is Cytoplasmic. A helical membrane pass occupies residues 636–656 (ILGFIMFGLYFVFLVVSVLLE). At 657–666 (DKVLVCPVSI) the chain is on the extracellular side.

The protein belongs to the Ca(2+):cation antiporter (CaCA) (TC 2.A.19) family. SLC24A subfamily.

Its subcellular location is the cell membrane. The catalysed reaction is Ca(2+)(out) + K(+)(out) + 4 Na(+)(in) = Ca(2+)(in) + K(+)(in) + 4 Na(+)(out). Its function is as follows. Calcium, potassium:sodium antiporter that transports 1 Ca(2+) and 1 K(+) in exchange for 4 Na(+). Required for learming and memory by regulating neuronal Ca(2+), which is essential for the development of synaptic plasticity. The polypeptide is Sodium/potassium/calcium exchanger 2 (Mus musculus (Mouse)).